We begin with the raw amino-acid sequence, 423 residues long: MLDPKILRQNLEHVVEKLRRRGFEMDSDTFLQLENKRKEAQLAIQSFQTKRNQLSKTIGMAKSKGENPEPLMAEVSQLNDELKQEEANFETIQKAFSDFQLAIPNLPHDSVPDGKSENDNREIRQWGAPPGFDFTPKDHTVLGERDNQLDFEAAAKLSGARFVVLRGSLARAHRALAQFMLDLHTDQHGYEEVYVPYLVHEECLYGTGQLPKFREEQFQVAGDRNFFLVPTGEVPLVNLARDEIIEAPALPKKWVAQTPCFRSEAGSYGKDVRGMIRQHQFQKVELVQLVQPENSYQALEEITRQAEKVLQLLALPYRVVELCAGDLGFAAAKTYDLEVWLPSQNKYREISSCSNCEDFQARRIQARWRNPKTGKPELLHTLNGSGLAVGRTLVAVMENYQQADGHIRVPDALKSYMGGVDYF.

T231–E233 is a binding site for L-serine. Residue R262 to E264 participates in ATP binding. An L-serine-binding site is contributed by E285. Residue E349–S352 coordinates ATP. L-serine is bound at residue S385.

It belongs to the class-II aminoacyl-tRNA synthetase family. Type-1 seryl-tRNA synthetase subfamily. As to quaternary structure, homodimer. The tRNA molecule binds across the dimer.

It is found in the cytoplasm. The enzyme catalyses tRNA(Ser) + L-serine + ATP = L-seryl-tRNA(Ser) + AMP + diphosphate + H(+). The catalysed reaction is tRNA(Sec) + L-serine + ATP = L-seryl-tRNA(Sec) + AMP + diphosphate + H(+). It functions in the pathway aminoacyl-tRNA biosynthesis; selenocysteinyl-tRNA(Sec) biosynthesis; L-seryl-tRNA(Sec) from L-serine and tRNA(Sec): step 1/1. In terms of biological role, catalyzes the attachment of serine to tRNA(Ser). Is also able to aminoacylate tRNA(Sec) with serine, to form the misacylated tRNA L-seryl-tRNA(Sec), which will be further converted into selenocysteinyl-tRNA(Sec). The protein is Serine--tRNA ligase of Coxiella burnetii (strain CbuG_Q212) (Coxiella burnetii (strain Q212)).